A 441-amino-acid chain; its full sequence is 23S rRNA (uracil(1939)-C(5))-methyltransferase RlmD (441 aa).

The TRAM domain occupies 1-56 (MSIDSLDMEARGVGRLLNEDGTPGKVIFVEGALPGETVSYRSFRRKPSYEQAHLVE). Residues C69, C75, C78, and C157 each coordinate [4Fe-4S] cluster. Residues Q265, F294, N299, E315, N343, and D364 each coordinate S-adenosyl-L-methionine. C397 (nucleophile) is an active-site residue.

It belongs to the class I-like SAM-binding methyltransferase superfamily. RNA M5U methyltransferase family. RlmD subfamily.

The enzyme catalyses uridine(1939) in 23S rRNA + S-adenosyl-L-methionine = 5-methyluridine(1939) in 23S rRNA + S-adenosyl-L-homocysteine + H(+). Catalyzes the formation of 5-methyl-uridine at position 1939 (m5U1939) in 23S rRNA. The sequence is that of 23S rRNA (uracil(1939)-C(5))-methyltransferase RlmD from Cupriavidus necator (strain ATCC 17699 / DSM 428 / KCTC 22496 / NCIMB 10442 / H16 / Stanier 337) (Ralstonia eutropha).